The primary structure comprises 243 residues: Bidirectional sugar transporter SWEET2a (243 aa).

The first 15 residues, 1-15 (MMNALGLSVAATSTG), serve as a signal peptide directing secretion. The Extracellular segment spans residues 16-24 (SPFHDVCCY). A helical membrane pass occupies residues 25–45 (GAGIAGNIFALVLFISPLPTF). The region spanning 27-112 (GIAGNIFALV…ATFIAFADAK (86 aa)) is the MtN3/slv 1 domain. The Cytoplasmic segment spans residues 46–56 (KRIVRNGSTEQ). A helical transmembrane segment spans residues 57–79 (FSAMPYIYSLLNCLICLWYGLPF). The Extracellular segment spans residues 80–90 (VSYGVVLVATV). A helical membrane pass occupies residues 91 to 111 (NSIGALFQLAYTATFIAFADA). Residues 112 to 118 (KNRVKVS) are Cytoplasmic-facing. The helical transmembrane segment at 119 to 139 (SLLVMVFGVFALIVYVSLALF) threads the bilayer. Over 140 to 146 (DHQTRQL) the chain is Extracellular. Residues 147–167 (FVGYLSVASLIFMFASPLSII) form a helical membrane-spanning segment. One can recognise a MtN3/slv 2 domain in the interval 147–229 (FVGYLSVASL…QLVLYGYFRK (83 aa)). At 168 to 180 (NLVIRTKSVEYMP) the chain is on the cytoplasmic side. The chain crosses the membrane as a helical span at residues 181–201 (FYLSLSMFLMSVSFFAYGVLL). Topologically, residues 202 to 203 (HD) are extracellular. The chain crosses the membrane as a helical span at residues 204-224 (FFIYIPNGIGTVLGVIQLVLY). Residues 225 to 243 (GYFRKGSREDSLPLLVTHT) lie on the Cytoplasmic side of the membrane.

The protein belongs to the SWEET sugar transporter family. In terms of assembly, forms homooligomers and/or heterooligomers.

The protein resides in the cell membrane. In terms of biological role, mediates both low-affinity uptake and efflux of sugar across the plasma membrane. The sequence is that of Bidirectional sugar transporter SWEET2a (SWEET2A) from Oryza sativa subsp. indica (Rice).